A 334-amino-acid chain; its full sequence is Zinc-finger homeodomain protein 10 (334 aa).

Positions 1 to 15 (MMDMTPTITTTTTPT) are enriched in low complexity. Disordered regions lie at residues 1 to 33 (MMDM…QPAK) and 103 to 164 (FHRR…LLSL). The ZF-HD dimerization-type; degenerate zinc-finger motif lies at 56 to 107 (YKECLKNHAAALGGHALDGCGEFMPSPSSISSDPTSLKCAACGCHRNFHRRD). A compositionally biased stretch (pro residues) spans 136–155 (PPPPPPPPPRSPNSASPPPI). Residues 200–263 (RKRFRTKFSQ…NNKNTFNRRD (64 aa)) constitute a DNA-binding region (homeobox). The disordered stretch occupies residues 292-334 (NGHHGVGGGGELHQSVSSGGGGGGFDSDSGGANGGNVNGSSSS). Residues 309–328 (SGGGGGGFDSDSGGANGGNV) show a composition bias toward gly residues.

In terms of assembly, homo- and heterodimer with other ZFHD proteins. Interacts with MIF1, MIF2 and MIF3; these interactions prevent nuclear localization and DNA-binding to inhibit transcription regulation activity. Binds to ZHD1, ZHD2, ZHD4, ZHD5, ZHD6, ZHD7 and ZHD8. Interacts with KIN10 and KIN11. Mostly expressed in rosettes (e.g. young leaves), flowers (e.g. styles), siliques and inflorescence.

The protein resides in the nucleus. In terms of biological role, putative transcription factor. Probably involved in establishing polarity during leaf development through the gibberellic acid (GA) signaling pathway. This chain is Zinc-finger homeodomain protein 10 (ZHD10), found in Arabidopsis thaliana (Mouse-ear cress).